A 339-amino-acid chain; its full sequence is Probable scoulerine-9-O-methyltransferase OMT3B (339 aa).

S-adenosyl-L-methionine is bound at residue Met161. Asp164 serves as a coordination point for substrate. Residues Thr165, Gly191, Asp214, 228–229, and Lys242 contribute to the S-adenosyl-L-methionine site; that span reads DV. Position 243–247 (243–247) interacts with substrate; that stretch reads SILHE. His246 (proton acceptor) is an active-site residue.

It belongs to the class I-like SAM-binding methyltransferase superfamily. Cation-independent O-methyltransferase family. COMT subfamily.

The catalysed reaction is (S)-scoulerine + S-adenosyl-L-methionine = (S)-tetrahydrocolumbamine + S-adenosyl-L-homocysteine + H(+). It participates in alkaloid biosynthesis. Methyltransferase involved in the biosynthesis of the benzylisoquinoline alkaloid noscapine. Catalyzes the conversion of (S)-scoulerine to (S)-tetrahydrocolumbamine. The chain is Probable scoulerine-9-O-methyltransferase OMT3B from Papaver somniferum (Opium poppy).